Here is a 130-residue protein sequence, read N- to C-terminus: Small ribosomal subunit protein uS8 (130 aa).

The protein belongs to the universal ribosomal protein uS8 family. Part of the 30S ribosomal subunit. Contacts proteins S5 and S12.

One of the primary rRNA binding proteins, it binds directly to 16S rRNA central domain where it helps coordinate assembly of the platform of the 30S subunit. This Marinomonas sp. (strain MWYL1) protein is Small ribosomal subunit protein uS8.